A 41-amino-acid chain; its full sequence is Large ribosomal subunit protein bL36 (41 aa).

Belongs to the bacterial ribosomal protein bL36 family.

This is Large ribosomal subunit protein bL36 from Stenotrophomonas maltophilia (strain R551-3).